The sequence spans 319 residues: Carbonic anhydrase 6 (319 aa).

The signal sequence occupies residues Met1–Ala14. In terms of domain architecture, Alpha-carbonic anhydrase spans His16–Phe273. Cys37 and Cys219 are joined by a disulfide. Asn62 carries an N-linked (GlcNAc...) asparagine glycan. Residue His80 is the Proton donor/acceptor of the active site. Zn(2+)-binding residues include His106, His108, and His133. Substrate is bound at residue Thr215–Thr216. Asn251 is a glycosylation site (N-linked (GlcNAc...) asparagine).

This sequence belongs to the alpha-carbonic anhydrase family. The cofactor is Zn(2+). In terms of tissue distribution, major constituent of saliva.

It is found in the secreted. It catalyses the reaction hydrogencarbonate + H(+) = CO2 + H2O. Its function is as follows. Reversible hydration of carbon dioxide. Its role in saliva is unknown. The sequence is that of Carbonic anhydrase 6 (CA6) from Bos taurus (Bovine).